Here is a 644-residue protein sequence, read N- to C-terminus: Threonine--tRNA ligase (644 aa).

A TGS domain is found at 1-62; the sequence is MSFSITLPDG…DSDSEVAIIT (62 aa). Residues 240–538 are catalytic; that stretch reads DHRTIGRDLD…LTEIYKGAFP (299 aa). Zn(2+) contacts are provided by Cys334, His385, and His515.

Belongs to the class-II aminoacyl-tRNA synthetase family. As to quaternary structure, homodimer. Zn(2+) is required as a cofactor.

Its subcellular location is the cytoplasm. The catalysed reaction is tRNA(Thr) + L-threonine + ATP = L-threonyl-tRNA(Thr) + AMP + diphosphate + H(+). Functionally, catalyzes the attachment of threonine to tRNA(Thr) in a two-step reaction: L-threonine is first activated by ATP to form Thr-AMP and then transferred to the acceptor end of tRNA(Thr). Also edits incorrectly charged L-seryl-tRNA(Thr). The polypeptide is Threonine--tRNA ligase (Lactobacillus helveticus (strain DPC 4571)).